A 532-amino-acid polypeptide reads, in one-letter code: Neutral amino acid transporter A (532 aa).

At methionine 1 the chain carries N-acetylmethionine. Polar residues predominate over residues 1 to 10 (MEKSNETNGY). The disordered stretch occupies residues 1-25 (MEKSNETNGYLDSAQAGPAAGPGAP). Topologically, residues 1-41 (MEKSNETNGYLDSAQAGPAAGPGAPGTAAGRARRCAGFLRR) are cytoplasmic. Over residues 14 to 25 (AQAGPAAGPGAP) the composition is skewed to low complexity. Transmembrane regions (helical) follow at residues 42–62 (QALVLLTVSGVLAGAGLGAAL), 88–108 (MIILPLVVCSLVSGAASLDAS), and 119–139 (AYFGLTTLSASALAVALAFII). Residues 140–216 (KPGSGAQTLQ…VTHEKIPIGT (77 aa)) are Extracellular-facing. N-linked (GlcNAc...) asparagine glycosylation is found at asparagine 201 and asparagine 206. Helical transmembrane passes span 217-237 (EIEGMNILGLVLFALVLGVAL), 257-277 (ATMVLVSWIMWYVPVGIMFLV), 298-318 (IFASILGHVIHGGIVLPLIYF), 328-348 (FLLGLLAPFATAFATCSSSAT), 373-393 (IGATVNMDGAAIFQCVAAVFI), and 418-438 (VGAAGVPAGGVLTIAIILEAI). Residues 500-532 (CKSEEETSPLVTHQNPAGPVASAPELESKESVL) are disordered. A phosphoserine mark is found at serine 507, serine 527, and serine 530.

This sequence belongs to the dicarboxylate/amino acid:cation symporter (DAACS) (TC 2.A.23) family. SLC1A4 subfamily. In terms of tissue distribution, expressed mostly in brain, muscle, and pancreas but detected in all tissues examined.

Its subcellular location is the membrane. It is found in the melanosome. The enzyme catalyses L-threonine(in) + Na(+)(in) = L-threonine(out) + Na(+)(out). It catalyses the reaction L-serine(in) + Na(+)(in) = L-serine(out) + Na(+)(out). The catalysed reaction is L-cysteine(in) + Na(+)(in) = L-cysteine(out) + Na(+)(out). It carries out the reaction L-alanine(in) + Na(+)(in) = L-alanine(out) + Na(+)(out). The enzyme catalyses L-proline(in) + Na(+)(in) = L-proline(out) + Na(+)(out). It catalyses the reaction 4-hydroxy-L-proline(in) + Na(+)(in) = 4-hydroxy-L-proline(out) + Na(+)(out). Functionally, sodium-dependent neutral amino-acid transporter that mediates transport of alanine, serine, cysteine, proline, hydroxyproline and threonine. This Homo sapiens (Human) protein is Neutral amino acid transporter A.